Consider the following 847-residue polypeptide: DNA mismatch repair protein MutS (847 aa).

602–609 is an ATP binding site; the sequence is GPNMSGKS.

Belongs to the DNA mismatch repair MutS family.

Functionally, this protein is involved in the repair of mismatches in DNA. It is possible that it carries out the mismatch recognition step. This protein has a weak ATPase activity. This chain is DNA mismatch repair protein MutS, found in Streptococcus uberis (strain ATCC BAA-854 / 0140J).